We begin with the raw amino-acid sequence, 245 residues long: Type III pantothenate kinase (245 aa).

6–13 (DQGNTILK) provides a ligand contact to ATP. Residues Tyr86 and 93–96 (GTDR) contribute to the substrate site. The active-site Proton acceptor is the Asp95. Residue Asp116 participates in K(+) binding. ATP is bound at residue Thr119. Residue Thr171 coordinates substrate.

This sequence belongs to the type III pantothenate kinase family. As to quaternary structure, homodimer. NH4(+) is required as a cofactor. Requires K(+) as cofactor.

Its subcellular location is the cytoplasm. It carries out the reaction (R)-pantothenate + ATP = (R)-4'-phosphopantothenate + ADP + H(+). It participates in cofactor biosynthesis; coenzyme A biosynthesis; CoA from (R)-pantothenate: step 1/5. Functionally, catalyzes the phosphorylation of pantothenate (Pan), the first step in CoA biosynthesis. The polypeptide is Type III pantothenate kinase (Azobacteroides pseudotrichonymphae genomovar. CFP2).